Consider the following 339-residue polypeptide: Ferrochelatase (339 aa).

Fe cation contacts are provided by His202 and Glu283.

The protein belongs to the ferrochelatase family.

It is found in the cytoplasm. The catalysed reaction is heme b + 2 H(+) = protoporphyrin IX + Fe(2+). Its pathway is porphyrin-containing compound metabolism; protoheme biosynthesis; protoheme from protoporphyrin-IX: step 1/1. In terms of biological role, catalyzes the ferrous insertion into protoporphyrin IX. This chain is Ferrochelatase, found in Psychrobacter cryohalolentis (strain ATCC BAA-1226 / DSM 17306 / VKM B-2378 / K5).